The primary structure comprises 90 residues: UPF0297 protein OEOE_1166 (90 aa).

Belongs to the UPF0297 family.

This is UPF0297 protein OEOE_1166 from Oenococcus oeni (strain ATCC BAA-331 / PSU-1).